A 455-amino-acid chain; its full sequence is UDP-N-acetylmuramoylalanine--D-glutamate ligase (455 aa).

Residue 118–124 (GTNGKST) participates in ATP binding.

Belongs to the MurCDEF family.

The protein resides in the cytoplasm. It catalyses the reaction UDP-N-acetyl-alpha-D-muramoyl-L-alanine + D-glutamate + ATP = UDP-N-acetyl-alpha-D-muramoyl-L-alanyl-D-glutamate + ADP + phosphate + H(+). The protein operates within cell wall biogenesis; peptidoglycan biosynthesis. In terms of biological role, cell wall formation. Catalyzes the addition of glutamate to the nucleotide precursor UDP-N-acetylmuramoyl-L-alanine (UMA). The polypeptide is UDP-N-acetylmuramoylalanine--D-glutamate ligase (Myxococcus xanthus (strain DK1622)).